The chain runs to 1435 residues: MDVLELLRVSGSNMYYSTFLADAWCYYISNQITMTMYLYCALGVLSMLFIGWFVYFKRLARLRLRHEIARSLSAVTMASGGDLRGPRFRKRDKMLFYGRRMLRKMKNVSGQMYSSGKGYKRRAVIRFARRILQLRRENMPLEVRTVEPPAEYLEETMEGSDRVPPDALYMLQSIRIFGHFEKPIFLRLCKHTQLLELMGGDYLFKITDPDDSVYIVQSGMINVYISNADGSTLSLKTVRKGESVTSLLSFIDVLSGNPSYYKTVTAKAIEKSVVIRLPMAAFQEVFKDSPDVMIRVIQVIMIRLQRVLFTALRNYLGLNAELVQNHMRFKGSSQGAGPSVYCSQTTRQATGSASATATAAAASGTAGSTHTAVPRPASSLSRYSQDEQHTLSDPNPGIPNLELSGDSVNTLFGEVNGGARLNSYPPLYHQRESDGNLSTRRGSITQQEQPEVGPVPSIDMRLVKSSAVDSLRKELGLPEQDAHIIDPFVEVREMEPNVTLITEGNADDVCVWFVMTGTLAVYQGNADATRIKQDKTDLLIHYVHPGEIVGGLAMLTGEASAYTIRSRNHSRVAFIRRAAIYQIMRQRPRIVLDLGNGVVRRLSPLVRQCDYALDWIFLESGRALYRQDESSDSTYIVLSGRMRSVITHPGGKKEIVGEYGKGDLVGIVEMITETSRTTTVMAVRDSELAKLPEGLFNAIKLRYPIVVTKLISFLSHRFLGSMQTRTTTGAPGAPVEANPVTHKYSTVALVPITDDVPLTPFTYELYHSLCAIGPVLRLTSDLARKQLGMNIFDASNEYRLTSWLAQQEDRNIITLYQCDNALSPWTQRCMRQADVVLIVGLGDHSHLVGKFEREIDRLALRTQKELVLLYPETASSKPANTLSWLNARPWVTKHHHVLCVKRIFTRKSQYRINDLYSRVLLSEPNMHSDFSRLARWLTGNSIGLVLGGGGARGAAHIGMLKAIQEAGIPIDMVGGVSIGALMGALWCSERNITTVTQKAREWSKKMTKWFLQLLDLTYPITSMFSGREFNKTIHETFGDVNIEDLWIPYFTLTTDITASCHRIHTNGSLWRYVRSSMSLSGYMPPLCDPKDGHLLLDGGYVNNLPGHLWRYCRASMSIAGVFPPFCDYRDGHLLLDGCYTNNVPADVMHNLGAAHIIAIDVGSQDDTDLTNYGDDLSGWWLLYKKWNPFTAPVKVPDLPDIQSRLAYVSCVRQLEEVKNSDYCEYIRPLINKYQTLSCAGCPETYGLNPSDLFSEDEDCDGYISEPTTLNTDVRRYQVPRGGNSLSLSETEMDMDSDVEMDLKMERKMDKATQSTPPLQSKAQILRRKHSKEEARHEWEIKREQKQELAREQELERERELSQKGTTAGATGYTPNAVIATQTSLIFMDEEDEMDKKKTKDNDRDEVRGSAEDTGKEKEEDKENRSNTNNETKNYL.

Residues methionine 1–threonine 35 lie on the Lumenal side of the membrane. A helical transmembrane segment spans residues methionine 36 to phenylalanine 56. At lysine 57 to leucine 1435 the chain is on the cytoplasmic side. Isoleucine 176–arginine 303 provides a ligand contact to a nucleoside 3',5'-cyclic phosphate. Low complexity predominate over residues alanine 361–alanine 372. Disordered stretches follow at residues alanine 361 to glycine 405 and asparagine 422 to valine 452. Residues glycine 435 to glutamine 449 are compositionally biased toward polar residues. Serine 443 is modified (phosphoserine). Residues glutamate 474–arginine 601 and isoleucine 590–arginine 717 contribute to the a nucleoside 3',5'-cyclic phosphate site. The region spanning leucine 944–arginine 1110 is the PNPLA domain. Positions glycine 948 to glycine 953 match the GXGXXG motif. A GXSXG motif is present at residues glycine 975–glycine 979. The Nucleophile role is filled by serine 977. The Proton acceptor role is filled by aspartate 1097. A DGA/G motif is present at residues aspartate 1097–glycine 1099. The interval methionine 1308–leucine 1435 is disordered. Positions alanine 1311–alanine 1322 are enriched in polar residues. Composition is skewed to basic and acidic residues over residues serine 1330–serine 1361 and methionine 1393–arginine 1424. The span at serine 1425 to leucine 1435 shows a compositional bias: polar residues.

This sequence belongs to the NTE family. Interacts with Pka-C3; interaction inhibits the catalytic function of Pka-C3 and the esterase activity of sws.

The protein resides in the endoplasmic reticulum membrane. It carries out the reaction a 1-acyl-sn-glycero-3-phosphocholine + H2O = sn-glycerol 3-phosphocholine + a fatty acid + H(+). Functionally, phospholipase B that deacylates intracellular phosphatidylcholine (PtdCho), generating glycerophosphocholine (GroPtdCho). This deacylation occurs at both sn-2 and sn-1 positions of PtdCho. Its specific chemical modification by certain organophosphorus (OP) compounds leads to distal axonopathy. Plays a role in the signaling mechanism between neurons and glia that regulates glia wrapping during development of the adult brain. Essential for membrane lipid homeostasis and cell survival in both neurons and glia of the adult brain. The chain is Neuropathy target esterase sws from Drosophila persimilis (Fruit fly).